The following is a 180-amino-acid chain: Large ribosomal subunit protein uL5 (180 aa).

It belongs to the universal ribosomal protein uL5 family. In terms of assembly, part of the 50S ribosomal subunit; part of the 5S rRNA/L5/L18/L25 subcomplex. Contacts the 5S rRNA and the P site tRNA. Forms a bridge to the 30S subunit in the 70S ribosome.

In terms of biological role, this is one of the proteins that bind and probably mediate the attachment of the 5S RNA into the large ribosomal subunit, where it forms part of the central protuberance. In the 70S ribosome it contacts protein S13 of the 30S subunit (bridge B1b), connecting the 2 subunits; this bridge is implicated in subunit movement. Contacts the P site tRNA; the 5S rRNA and some of its associated proteins might help stabilize positioning of ribosome-bound tRNAs. The protein is Large ribosomal subunit protein uL5 of Ralstonia pickettii (strain 12J).